Here is a 160-residue protein sequence, read N- to C-terminus: Small ribosomal subunit protein uS7 (160 aa).

The protein belongs to the universal ribosomal protein uS7 family. In terms of assembly, part of the 30S ribosomal subunit. Contacts proteins S9 and S11.

In terms of biological role, one of the primary rRNA binding proteins, it binds directly to 16S rRNA where it nucleates assembly of the head domain of the 30S subunit. Is located at the subunit interface close to the decoding center, probably blocks exit of the E-site tRNA. The sequence is that of Small ribosomal subunit protein uS7 from Anaplasma marginale (strain Florida).